The sequence spans 369 residues: Superinfection exclusion protein (369 aa).

The signal sequence occupies residues 1–15; it reads MIALLILSLTCSVST.

Belongs to the serpin family. Orthopoxvirus OPG040 subfamily. Interacts with A56 protein.

The protein resides in the virion membrane. It is found in the host cell membrane. Its function is as follows. Prevents cell to cell fusion via its interaction with A56 protein. The A56-K2 complex associates with components of the entry fusion complex (EFC) presumably to avoid superinfection and syncytium formation. This chain is Superinfection exclusion protein (OPG040), found in Vaccinia virus (strain Copenhagen) (VACV).